A 153-amino-acid chain; its full sequence is Myosin regulatory light chain, smooth muscle (153 aa).

EF-hand domains are found at residues 12–47 (SQIQ…LGRG), 81–116 (DPEE…QADR), and 117–152 (FSQS…GQEE). Residues aspartate 25, asparagine 27, aspartate 29, and aspartate 36 each contribute to the Ca(2+) site.

In molluscan muscle, calcium regulation is associated with myosin rather than with actin. Muscle myosin contains two types of light chains: the catalytic light chain, essential for ATPase activity, and the regulatory light chain, a calcium-binding protein responsible for Ca(2+) dependent binding and Ca(2+) dependent Mg-ATPase activity. The sequence is that of Myosin regulatory light chain, smooth muscle from Halocynthia roretzi (Sea squirt).